The chain runs to 358 residues: MQSTEPWSPSWGTLSWDYSGSGSLDQVELCPAWNLPYGHAIIPALYLAAFAVGLPGNAFVVWLLSRQRGPRRLVDTFVLHLAAADLGFVLTLPLWAAAEARGGLWPFGDGLCKVSSFALAVTRCAGALLLAGMSVDRYLAVGRPLSARPLRSARCVRAVCGAAWAAAFLAGLPALLYRGLQPSLDGVGSQCAEEPWEALQGVGLLLLLLTFALPLAVTLICYWRVSRRLPRVGRARSNSLRIIFTVESVFVGCWLPFGVLRSLFHLARLQALPLPCSLLLALRWGLTVTTCLAFVNSSANPVIYLLLDRSFRARARFGLCARAGRQVRRISSASSLSRDDSSVFRGRSPKVNSASATW.

The Extracellular portion of the chain corresponds to methionine 1–proline 43. A helical transmembrane segment spans residues alanine 44–leucine 64. Residues serine 65–threonine 76 are Cytoplasmic-facing. Residues phenylalanine 77 to alanine 97 traverse the membrane as a helical segment. Topologically, residues alanine 98–lysine 113 are extracellular. Cysteine 112 and cysteine 191 are disulfide-bonded. The chain crosses the membrane as a helical span at residues valine 114–serine 134. Residues valine 135 to cysteine 155 lie on the Cytoplasmic side of the membrane. Residues valine 156 to leucine 176 traverse the membrane as a helical segment. At tyrosine 177–glutamine 200 the chain is on the extracellular side. A helical transmembrane segment spans residues glycine 201 to cysteine 221. Topologically, residues tyrosine 222–serine 239 are cytoplasmic. Residues leucine 240–leucine 260 traverse the membrane as a helical segment. Over arginine 261–tryptophan 284 the chain is Extracellular. The helical transmembrane segment at glycine 285–leucine 307 threads the bilayer. Residues aspartate 308 to tryptophan 358 lie on the Cytoplasmic side of the membrane. Residues aspartate 339–tryptophan 358 form a disordered region.

Belongs to the G-protein coupled receptor 1 family.

The protein localises to the membrane. In terms of biological role, orphan receptor. The polypeptide is Probable G-protein coupled receptor 25 (Gpr25) (Mus musculus (Mouse)).